We begin with the raw amino-acid sequence, 356 residues long: Replication factor C subunit 3 (356 aa).

The residue at position 20 (Lys20) is an N6-acetyllysine. Ser125 is subject to Phosphoserine.

Belongs to the activator 1 small subunits family. As to quaternary structure, subunit of the RFC complex, an heteropentameric complex consisting of a large subunit RFC1 and four small subunits RFC2, RFC3, RFC4 and RFC5; the RFC complex interacts with PCNA. Forms an heterotetrameric complex with RFC2, RFC4 and RFC5; this complex has ATPase activity but is not stimulated by PCNA. The heterotetramer of subunits RFC2, RFC3, RFC4 and RFC5 interacts with RAD17. Interacts with CNTD1; this interaction facilitates crossover formation.

It localises to the nucleus. Its function is as follows. Subunit of the replication factor C (RFC) complex which acts during elongation of primed DNA templates by DNA polymerases delta and epsilon, and is necessary for ATP-dependent loading of proliferating cell nuclear antigen (PCNA) onto primed DNA. In Homo sapiens (Human), this protein is Replication factor C subunit 3 (RFC3).